The primary structure comprises 779 residues: DNA topoisomerase 1 (779 aa).

Positions Met-1 to Val-111 constitute a Toprim domain. 2 residues coordinate Mg(2+): Glu-7 and Asp-80. Residues Asp-132–Glu-568 form the Topo IA-type catalytic domain. An interaction with DNA region spans residues Ser-166 to Gln-171. The active-site O-(5'-phospho-DNA)-tyrosine intermediate is the Tyr-304. A C4-type zinc finger spans residues Cys-600 to Cys-627.

Belongs to the type IA topoisomerase family. Monomer. Mg(2+) is required as a cofactor.

It carries out the reaction ATP-independent breakage of single-stranded DNA, followed by passage and rejoining.. In terms of biological role, releases the supercoiling and torsional tension of DNA, which is introduced during the DNA replication and transcription, by transiently cleaving and rejoining one strand of the DNA duplex. Introduces a single-strand break via transesterification at a target site in duplex DNA. The scissile phosphodiester is attacked by the catalytic tyrosine of the enzyme, resulting in the formation of a DNA-(5'-phosphotyrosyl)-enzyme intermediate and the expulsion of a 3'-OH DNA strand. The free DNA strand then undergoes passage around the unbroken strand, thus removing DNA supercoils. Finally, in the religation step, the DNA 3'-OH attacks the covalent intermediate to expel the active-site tyrosine and restore the DNA phosphodiester backbone. The chain is DNA topoisomerase 1 from Rickettsia typhi (strain ATCC VR-144 / Wilmington).